We begin with the raw amino-acid sequence, 198 residues long: 3-isopropylmalate dehydratase small subunit (198 aa).

This sequence belongs to the LeuD family. LeuD type 1 subfamily. In terms of assembly, heterodimer of LeuC and LeuD.

It catalyses the reaction (2R,3S)-3-isopropylmalate = (2S)-2-isopropylmalate. Its pathway is amino-acid biosynthesis; L-leucine biosynthesis; L-leucine from 3-methyl-2-oxobutanoate: step 2/4. Functionally, catalyzes the isomerization between 2-isopropylmalate and 3-isopropylmalate, via the formation of 2-isopropylmaleate. This chain is 3-isopropylmalate dehydratase small subunit, found in Corynebacterium jeikeium (strain K411).